Reading from the N-terminus, the 474-residue chain is tRNA-2-methylthio-N(6)-dimethylallyladenosine synthase (474 aa).

One can recognise an MTTase N-terminal domain in the interval Lys3 to Gly120. Residues Cys12, Cys49, Cys83, Cys157, Cys161, and Cys164 each contribute to the [4Fe-4S] cluster site. The Radical SAM core domain maps to Arg143–Gln375. Positions Arg378 to Arg441 constitute a TRAM domain.

This sequence belongs to the methylthiotransferase family. MiaB subfamily. In terms of assembly, monomer. Requires [4Fe-4S] cluster as cofactor.

It is found in the cytoplasm. The enzyme catalyses N(6)-dimethylallyladenosine(37) in tRNA + (sulfur carrier)-SH + AH2 + 2 S-adenosyl-L-methionine = 2-methylsulfanyl-N(6)-dimethylallyladenosine(37) in tRNA + (sulfur carrier)-H + 5'-deoxyadenosine + L-methionine + A + S-adenosyl-L-homocysteine + 2 H(+). In terms of biological role, catalyzes the methylthiolation of N6-(dimethylallyl)adenosine (i(6)A), leading to the formation of 2-methylthio-N6-(dimethylallyl)adenosine (ms(2)i(6)A) at position 37 in tRNAs that read codons beginning with uridine. The chain is tRNA-2-methylthio-N(6)-dimethylallyladenosine synthase from Sodalis glossinidius (strain morsitans).